Consider the following 294-residue polypeptide: RAB7A-interacting MON1-CCZ1 complex subunit 1 (294 aa).

Position 2 is an N-acetylalanine (Ala2).

Belongs to the RIMOC1 family. As to quaternary structure, interacts with the MON1A-CCZ1B complex. Interacts with GDP-bound RAB7A and promotes its interaction with the MON1A-CCZ1B complex.

The protein localises to the cytoplasm. It localises to the cytosol. Its function is as follows. Plays an important role in the removal of damaged mitochondria via mitophagy by controlling the stability and localization of RAB7A. Required for the recruitment of RAB7A and ATG9A vesicles to damaged mitochondria and promotes the stability of RAB7A by inhibiting its proteasomal degradation during mitophagy. In Mus musculus (Mouse), this protein is RAB7A-interacting MON1-CCZ1 complex subunit 1.